Here is a 274-residue protein sequence, read N- to C-terminus: Nuclease (274 aa).

Residues 1 to 24 (MGICGKLGVAALVALIVGCSPVQS) form the signal peptide. H124 (proton acceptor) is an active-site residue. Residues N155, D246, E249, D255, F256, Q265, and E269 each coordinate Mn(2+).

The protein belongs to the DNA/RNA non-specific endonuclease family. In terms of assembly, monomer. The cofactor is Mn(2+). Mg(2+) is required as a cofactor. It depends on Ca(2+) as a cofactor. Requires Co(2+) as cofactor. The N-terminus is blocked.

The protein resides in the periplasm. Functionally, catalyzes the degradation of both RNA and DNA; has the potential to act as an endonuclease. The chain is Nuclease (nucA) from Nostoc sp. (strain PCC 7120 / SAG 25.82 / UTEX 2576).